Consider the following 146-residue polypeptide: Endoribonuclease YbeY (146 aa).

His-108, His-112, and His-118 together coordinate Zn(2+).

It belongs to the endoribonuclease YbeY family. Zn(2+) serves as cofactor.

The protein resides in the cytoplasm. Its function is as follows. Single strand-specific metallo-endoribonuclease involved in late-stage 70S ribosome quality control and in maturation of the 3' terminus of the 16S rRNA. The sequence is that of Endoribonuclease YbeY from Onion yellows phytoplasma (strain OY-M).